Here is a 164-residue protein sequence, read N- to C-terminus: Large ribosomal subunit protein uL15 (164 aa).

Positions 1-33 (MTSKKRRQRGSRTHGGGTHKNRRGAGHRGGRGR) are enriched in basic residues. Disordered regions lie at residues 1-59 (MTSK…PGAE) and 137-164 (AGGS…NDEN). Residues 34–43 (AGRDKHEQHN) show a composition bias toward basic and acidic residues. Acidic residues predominate over residues 153–164 (GEDEEPNSNDEN).

The protein belongs to the universal ribosomal protein uL15 family. As to quaternary structure, part of the 50S ribosomal subunit.

Binds to the 23S rRNA. The polypeptide is Large ribosomal subunit protein uL15 (Haloquadratum walsbyi (strain DSM 16790 / HBSQ001)).